Here is a 149-residue protein sequence, read N- to C-terminus: Putative pre-16S rRNA nuclease (149 aa).

This sequence belongs to the YqgF nuclease family.

The protein resides in the cytoplasm. In terms of biological role, could be a nuclease involved in processing of the 5'-end of pre-16S rRNA. This Cupriavidus metallidurans (strain ATCC 43123 / DSM 2839 / NBRC 102507 / CH34) (Ralstonia metallidurans) protein is Putative pre-16S rRNA nuclease.